The chain runs to 326 residues: Probable pectate lyase B (326 aa).

An N-terminal signal peptide occupies residues 1–15; that stretch reads MRVTAILTLATIAIA. The Ca(2+) site is built by Asp-133, Asp-162, and Asp-166. The active site involves Arg-219.

Belongs to the polysaccharide lyase 1 family. Requires Ca(2+) as cofactor.

The protein resides in the secreted. It carries out the reaction Eliminative cleavage of (1-&gt;4)-alpha-D-galacturonan to give oligosaccharides with 4-deoxy-alpha-D-galact-4-enuronosyl groups at their non-reducing ends.. In terms of biological role, pectinolytic enzyme consist of four classes of enzymes: pectin lyase, polygalacturonase, pectin methylesterase and rhamnogalacturonase. Among pectinolytic enzymes, pectin lyase is the most important in depolymerization of pectin, since it cleaves internal glycosidic bonds of highly methylated pectins. Favors pectate, the anion, over pectin, the methyl ester. The protein is Probable pectate lyase B (plyB) of Aspergillus flavus (strain ATCC 200026 / FGSC A1120 / IAM 13836 / NRRL 3357 / JCM 12722 / SRRC 167).